Consider the following 239-residue polypeptide: Large ribosomal subunit protein uL2 (239 aa).

The tract at residues Val200–Lys239 is disordered. Basic residues predominate over residues Pro222–Lys239.

It belongs to the universal ribosomal protein uL2 family. As to quaternary structure, part of the 50S ribosomal subunit. Forms a bridge to the 30S subunit in the 70S ribosome.

Its function is as follows. One of the primary rRNA binding proteins. Required for association of the 30S and 50S subunits to form the 70S ribosome, for tRNA binding and peptide bond formation. It has been suggested to have peptidyltransferase activity; this is somewhat controversial. Makes several contacts with the 16S rRNA in the 70S ribosome. This chain is Large ribosomal subunit protein uL2, found in Thermococcus gammatolerans (strain DSM 15229 / JCM 11827 / EJ3).